Here is a 780-residue protein sequence, read N- to C-terminus: ATP-dependent 6-phosphofructokinase, muscle type (780 aa).

Thr-2 carries the N-acetylthreonine modification. The interval 2–390 is N-terminal catalytic PFK domain 1; it reads THEEHHAAKT…NWEVYKLLAH (389 aa). ATP-binding positions include Gly-25, 88-89, and 118-121; these read RC and GDGS. Mg(2+) is bound at residue Asp-119. Position 133 is a phosphoserine (Ser-133). Residues 164–166, Arg-201, 208–210, Glu-264, Arg-292, and 298–301 contribute to the substrate site; these read SID, MGR, and HVQR. Residue Asp-166 is the Proton acceptor of the active site. Position 377 is a phosphoserine (Ser-377). Residues 391 to 401 are interdomain linker; the sequence is VRPPVSKSGSH. The C-terminal regulatory PFK domain 2 stretch occupies residues 402–780; that stretch reads TVAVMNVGAP…TRKRSGEGAV (379 aa). Residues Arg-471 and 528 to 532 each bind beta-D-fructose 2,6-bisphosphate; that span reads TVSNN. A glycan (O-linked (GlcNAc) serine) is linked at Ser-530. Lys-557 carries the post-translational modification N6-(2-hydroxyisobutyryl)lysine. Residues Arg-566, 573–575, Glu-629, Arg-655, and 661–664 each bind beta-D-fructose 2,6-bisphosphate; these read MGG and HMQQ. The residue at position 667 (Ser-667) is a Phosphoserine. Arg-735 is a beta-D-fructose 2,6-bisphosphate binding site. Position 775 is a phosphoserine (Ser-775).

It belongs to the phosphofructokinase type A (PFKA) family. ATP-dependent PFK group I subfamily. Eukaryotic two domain clade 'E' sub-subfamily. Homo- and heterotetramers. Phosphofructokinase (PFK) enzyme functions as a tetramer composed of different combinations of 3 types of subunits, called PFKM (M), PFKL (L) and PFKP (P). The composition of the PFK tetramer differs according to the tissue type it is present in. The kinetic and regulatory properties of the tetrameric enzyme are dependent on the subunit composition, hence can vary across tissues. Interacts (via C-terminus) with HK1 (via N-terminal spermatogenic cell-specific region). The cofactor is Mg(2+). Post-translationally, glcNAcylation decreases enzyme activity.

It localises to the cytoplasm. The enzyme catalyses beta-D-fructose 6-phosphate + ATP = beta-D-fructose 1,6-bisphosphate + ADP + H(+). The protein operates within carbohydrate degradation; glycolysis; D-glyceraldehyde 3-phosphate and glycerone phosphate from D-glucose: step 3/4. Its activity is regulated as follows. Allosterically activated by ADP, AMP, or fructose 2,6-bisphosphate, and allosterically inhibited by ATP or citrate. Its function is as follows. Catalyzes the phosphorylation of D-fructose 6-phosphate to fructose 1,6-bisphosphate by ATP, the first committing step of glycolysis. The sequence is that of ATP-dependent 6-phosphofructokinase, muscle type (PFKM) from Macaca fascicularis (Crab-eating macaque).